We begin with the raw amino-acid sequence, 306 residues long: Phospho-N-acetylmuramoyl-pentapeptide-transferase (306 aa).

10 consecutive transmembrane segments (helical) span residues 2 to 22, 47 to 67, 71 to 91, 105 to 125, 131 to 151, 162 to 182, 185 to 205, 209 to 229, 236 to 256, and 284 to 304; these read IALL…LKYW, SGTP…FLFF, FFIS…DLKL, IFLS…DYKI, LIID…IAVP, GLAG…SFHF, IALE…FNSH, IFMG…LSVV, LIFL…QVFF, and IVWR…VLWY.

This sequence belongs to the glycosyltransferase 4 family. MraY subfamily. The cofactor is Mg(2+).

The protein localises to the cell inner membrane. It carries out the reaction UDP-N-acetyl-alpha-D-muramoyl-L-alanyl-gamma-D-glutamyl-meso-2,6-diaminopimeloyl-D-alanyl-D-alanine + di-trans,octa-cis-undecaprenyl phosphate = di-trans,octa-cis-undecaprenyl diphospho-N-acetyl-alpha-D-muramoyl-L-alanyl-D-glutamyl-meso-2,6-diaminopimeloyl-D-alanyl-D-alanine + UMP. It functions in the pathway cell wall biogenesis; peptidoglycan biosynthesis. Functionally, catalyzes the initial step of the lipid cycle reactions in the biosynthesis of the cell wall peptidoglycan: transfers peptidoglycan precursor phospho-MurNAc-pentapeptide from UDP-MurNAc-pentapeptide onto the lipid carrier undecaprenyl phosphate, yielding undecaprenyl-pyrophosphoryl-MurNAc-pentapeptide, known as lipid I. In Dictyoglomus thermophilum (strain ATCC 35947 / DSM 3960 / H-6-12), this protein is Phospho-N-acetylmuramoyl-pentapeptide-transferase.